The primary structure comprises 326 residues: Histone-lysine N-methyltransferase Suv4-20 (326 aa).

The region spanning 163-273 is the SET domain; the sequence is QECTRYSLEG…AGDEITCFYG (111 aa). A disordered region spans residues 294–313; it reads RGKFSTSDEEENDEPSALSE.

Belongs to the class V-like SAM-binding methyltransferase superfamily. Histone-lysine methyltransferase family. Suvar4-20 subfamily.

It is found in the nucleus. Its subcellular location is the chromosome. It carries out the reaction N(6)-methyl-L-lysyl(20)-[histone H4] + S-adenosyl-L-methionine = N(6),N(6)-dimethyl-L-lysyl(20)-[histone H4] + S-adenosyl-L-homocysteine + H(+). It catalyses the reaction N(6),N(6)-dimethyl-L-lysyl(20)-[histone H4] + S-adenosyl-L-methionine = N(6),N(6),N(6)-trimethyl-L-lysyl(20)-[histone H4] + S-adenosyl-L-homocysteine + H(+). Its function is as follows. Histone methyltransferase that specifically di- and trimethylates 'Lys-20' of histone H4 (H4K20me2/me3). H4 'Lys-20' trimethylation represents a specific tag for epigenetic transcriptional repression. Contributes to dosage compensation of X chromosome-relative to autosome-linked gene expression, possibly by converting H4K20me1 to H4K20m2/me3 on autosomes. Involved in the regulation of growth and body fat metabolism downstream of the TOR complex 2 pathway. This Caenorhabditis briggsae protein is Histone-lysine N-methyltransferase Suv4-20.